We begin with the raw amino-acid sequence, 559 residues long: Glycerol kinase (559 aa).

T20 serves as a coordination point for ADP. Positions 20, 21, and 22 each coordinate ATP. T20 lines the sn-glycerol 3-phosphate pocket. R24 is a binding site for ADP. 3 residues coordinate sn-glycerol 3-phosphate: R94, E95, and Y148. Glycerol-binding residues include R94, E95, and Y148. G252 is a binding site for beta-D-fructose 1,6-bisphosphate. Residue D265 participates in sn-glycerol 3-phosphate binding. 2 residues coordinate glycerol: D265 and Q266. Residues T287, G332, G433, and N437 each contribute to the ADP site. ATP-binding residues include T287, G332, and G433. E501 contacts Zn(2+). Residues 532 to 552 traverse the membrane as a helical segment; it reads IFCSLPLGFFIVSSVVMLIGA.

This sequence belongs to the FGGY kinase family.

The protein resides in the mitochondrion outer membrane. The protein localises to the nucleus. It localises to the cytoplasm. It is found in the cytosol. It carries out the reaction glycerol + ATP = sn-glycerol 3-phosphate + ADP + H(+). Its pathway is polyol metabolism; glycerol degradation via glycerol kinase pathway; sn-glycerol 3-phosphate from glycerol: step 1/1. Its function is as follows. Kinase that plays a key role in glycerol metabolism, catalyzing its phosphorylation to produce sn-glycerol 3-phosphate. Sn-glycerol 3-phosphate is a crucial intermediate in various metabolic pathways, such as the synthesis of glycerolipids and triglycerides, glycogenesis, glycolysis and gluconeogenesis. This chain is Glycerol kinase, found in Bos taurus (Bovine).